Consider the following 434-residue polypeptide: Trigger factor (434 aa).

The 86-residue stretch at 160–245 (GDKVKMNFVG…LTEVLAANLP (86 aa)) folds into the PPIase FKBP-type domain.

It belongs to the FKBP-type PPIase family. Tig subfamily.

It is found in the cytoplasm. It carries out the reaction [protein]-peptidylproline (omega=180) = [protein]-peptidylproline (omega=0). Involved in protein export. Acts as a chaperone by maintaining the newly synthesized protein in an open conformation. Functions as a peptidyl-prolyl cis-trans isomerase. In Shewanella sp. (strain MR-4), this protein is Trigger factor.